Reading from the N-terminus, the 217-residue chain is MNLVLMGLPGAGKGTQAQKIVENFPIPHISTGDIFRAAMKNETPMGIEAKKYIDKGELVPDEVTNGIVKERLAQDDTKDGFMLDGFPRNLNQAAALDEMLAESNRHLDAVINIHVEPDVLVERLSGRFICRNCGATYHKLYNAPKVEGTCDVCGHHEFYQRDDDKPETVKNRLDVNIKLNTPLVDYYQKKGVLHEINGEQDIDKVYEDIKKVLTNLN.

Residue 10–15 (GAGKGT) coordinates ATP. The NMP stretch occupies residues 30 to 59 (STGDIFRAAMKNETPMGIEAKKYIDKGELV). AMP contacts are provided by residues threonine 31, arginine 36, 57–59 (ELV), 85–88 (GFPR), and glutamine 92. Residues 126 to 164 (GRFICRNCGATYHKLYNAPKVEGTCDVCGHHEFYQRDDD) form an LID region. Arginine 127 provides a ligand contact to ATP. Residues cysteine 130 and cysteine 133 each coordinate Zn(2+). Residue 136-137 (TY) coordinates ATP. Residues cysteine 150 and cysteine 153 each contribute to the Zn(2+) site. Residues arginine 161 and arginine 172 each coordinate AMP. Glutamine 200 contacts ATP.

Belongs to the adenylate kinase family. As to quaternary structure, monomer.

It localises to the cytoplasm. The enzyme catalyses AMP + ATP = 2 ADP. Its pathway is purine metabolism; AMP biosynthesis via salvage pathway; AMP from ADP: step 1/1. Its function is as follows. Catalyzes the reversible transfer of the terminal phosphate group between ATP and AMP. Plays an important role in cellular energy homeostasis and in adenine nucleotide metabolism. This is Adenylate kinase from Limosilactobacillus reuteri subsp. reuteri (strain JCM 1112) (Lactobacillus reuteri).